A 334-amino-acid polypeptide reads, in one-letter code: Glycerol-3-phosphate dehydrogenase [NAD(P)+] (334 aa).

Residues S14, Y15, H35, and K109 each contribute to the NADPH site. Residues K109, G138, and T140 each coordinate sn-glycerol 3-phosphate. A142 contributes to the NADPH binding site. Sn-glycerol 3-phosphate is bound by residues K194, D247, S257, R258, and N259. The active-site Proton acceptor is the K194. R258 is an NADPH binding site. 2 residues coordinate NADPH: V282 and E284.

The protein belongs to the NAD-dependent glycerol-3-phosphate dehydrogenase family.

Its subcellular location is the cytoplasm. The enzyme catalyses sn-glycerol 3-phosphate + NAD(+) = dihydroxyacetone phosphate + NADH + H(+). It catalyses the reaction sn-glycerol 3-phosphate + NADP(+) = dihydroxyacetone phosphate + NADPH + H(+). It functions in the pathway membrane lipid metabolism; glycerophospholipid metabolism. Its function is as follows. Catalyzes the reduction of the glycolytic intermediate dihydroxyacetone phosphate (DHAP) to sn-glycerol 3-phosphate (G3P), the key precursor for phospholipid synthesis. In Aeromonas hydrophila subsp. hydrophila (strain ATCC 7966 / DSM 30187 / BCRC 13018 / CCUG 14551 / JCM 1027 / KCTC 2358 / NCIMB 9240 / NCTC 8049), this protein is Glycerol-3-phosphate dehydrogenase [NAD(P)+].